The chain runs to 251 residues: Flap endonuclease Xni (251 aa).

Residue D104 participates in Mg(2+) binding. In terms of domain architecture, 5'-3' exonuclease spans 160–250 (VLPRQLPDYW…SGNLQQLRLK (91 aa)). 5 residues coordinate K(+): L171, A172, P180, V182, and V185. Residues 184–189 (GVGAKT) form an interaction with DNA region.

This sequence belongs to the Xni family. Mg(2+) serves as cofactor. It depends on K(+) as a cofactor.

Functionally, has flap endonuclease activity. During DNA replication, flap endonucleases cleave the 5'-overhanging flap structure that is generated by displacement synthesis when DNA polymerase encounters the 5'-end of a downstream Okazaki fragment. In Yersinia pseudotuberculosis serotype I (strain IP32953), this protein is Flap endonuclease Xni.